The primary structure comprises 313 residues: CBK1 kinase activator protein MOB2 (313 aa).

The interval 1–109 (MSFLNTIRGL…KRSSIQTTKS (109 aa)) is disordered. A compositionally biased stretch (polar residues) spans 23 to 69 (PSNNAIYSHSNLSGNGLRRTQSPTKFSPSKLSSKGAQGSAAYTSSPT). Phosphoserine; by CDC28 is present on residues S44, S51, S67, and S97. A compositionally biased stretch (low complexity) spans 76–97 (QSLQHQDSQSSLQYQQQSGSVS). A compositionally biased stretch (polar residues) spans 98–109 (PSKRSSIQTTKS).

It belongs to the MOB1/phocein family. In terms of assembly, interacts with protein kinase CBK1 to form the RAM CBK1-MOB2 kinase complex. Phosphorylated by CDC28 at Ser-44, Ser-51, Ser-67, and Ser-97. Phosphorylation occurs during bud emergence and is maintained until the G2/M transition. Dephosphorylated at the end of mitosis. Phosphorylation is required for the maintenance of polarisome components in hyphae.

It localises to the nucleus. It is found in the cytoplasm. Functionally, functions as an activator subunit for the CBK1 protein kinase. Part of the regulation of ACE2 activity and cellular morphogenesis (RAM) signaling network. The RAM network is critically required for hyphal growth as well as normal vegetative growth, and for polarization of lipid rafts and the actin cytoskeleton. It play an essential role in biofilm formation. The RAM network also plays a role in serum- and antifungal azoles-induced activation of ergosterol biosynthesis genes, especially those involved in the late steps of ergosterol biosynthesis. The sequence is that of CBK1 kinase activator protein MOB2 (MOB2) from Candida albicans (strain SC5314 / ATCC MYA-2876) (Yeast).